The primary structure comprises 59 residues: Conotoxin Cl14.4 (59 aa).

Residues 1–19 (MKFLLFLSVALLLTSFIET) form the signal peptide. Residues 20-36 (VTVNKAGMERPSRALVG) constitute a propeptide that is removed on maturation. Isoleucine amide is present on Ile-58.

Post-translationally, contains 2 disulfide bonds. In terms of tissue distribution, expressed by the venom duct.

The protein resides in the secreted. In Californiconus californicus (California cone), this protein is Conotoxin Cl14.4.